Reading from the N-terminus, the 76-residue chain is Exodeoxyribonuclease 7 small subunit (76 aa).

This sequence belongs to the XseB family. Heterooligomer composed of large and small subunits.

The protein localises to the cytoplasm. It carries out the reaction Exonucleolytic cleavage in either 5'- to 3'- or 3'- to 5'-direction to yield nucleoside 5'-phosphates.. In terms of biological role, bidirectionally degrades single-stranded DNA into large acid-insoluble oligonucleotides, which are then degraded further into small acid-soluble oligonucleotides. This chain is Exodeoxyribonuclease 7 small subunit, found in Lactiplantibacillus plantarum (strain ATCC BAA-793 / NCIMB 8826 / WCFS1) (Lactobacillus plantarum).